A 59-amino-acid polypeptide reads, in one-letter code: Potassium channel toxin alpha-KTx 15.5 (59 aa).

A signal peptide spans 1–22; that stretch reads MKFSSIILLTLLICSMSIFGNC. Q23 bears the Pyrrolidone carboxylic acid mark. 3 disulfides stabilise this stretch: C30–C50, C35–C55, and C39–C57.

Belongs to the short scorpion toxin superfamily. Potassium channel inhibitor family. Alpha-KTx 15 subfamily. Expressed by the venom gland.

The protein localises to the secreted. Functionally, blocker of A-type voltage-gated potassium channels of cerebellar granular cells. May also inhibit Kv4/KCND when coexpressed with DPP6 or DPP10. The occlusion of the outer entry of the K(+) conducting pore is partially reversible and affects both open and closed channels. It shares the same target in rat brain than BmTX3 (AC Q8I0L5) and AmmTX3 (AC P60208). The sequence is that of Potassium channel toxin alpha-KTx 15.5 from Androctonus australis (Sahara scorpion).